The chain runs to 89 residues: Ubiquinol-cytochrome-c reductase complex assembly factor 3 (89 aa).

The Mitochondrial matrix portion of the chain corresponds to 1–7; the sequence is MEAARKA. Residues 8–28 form a helical membrane-spanning segment; the sequence is LAVVAVLGAGGGVGSILFALV. The mediates lipid-binding stretch occupies residues 23-80; that stretch reads ILFALVTPGELQKQLMLQEMPERDSRRRDEAVRTKELVMATLKDAAATKENVAWRRNW. At 29–89 the chain is on the mitochondrial intermembrane side; it reads TPGELQKQLM…WTVRGDGRSA (61 aa).

This sequence belongs to the UQCC3 family. Associates with the ubiquinol-cytochrome c reductase complex (mitochondrial respiratory chain complex III(CIII) or cytochrome b-c1 complex). Interacts with UQCC1. Forms a complex, named COMC, composed of UQCC1, UQCC2; UQCC3 and UQCC4; mediates MT-CYB hemylation and association with the first nuclear-encoded complex III subunit UQCRQ. In terms of processing, probably cleaved by OMA1 under mitochondrial stress conditions.

It localises to the mitochondrion inner membrane. Functionally, required for the assembly of the ubiquinol-cytochrome c reductase complex (mitochondrial respiratory chain complex III or cytochrome b-c1 complex), mediating cytochrome b recruitment and probably stabilization within the complex. Thereby, plays an important role in ATP production by mitochondria. Cardiolipin-binding protein, it may also control the cardiolipin composition of mitochondria membranes and their morphology. The polypeptide is Ubiquinol-cytochrome-c reductase complex assembly factor 3 (Rattus norvegicus (Rat)).